The primary structure comprises 930 residues: Translation initiation factor IF-2 (930 aa).

Positions 29 to 316 are disordered; the sequence is GEFVKSASST…GRKSKRAKRA (288 aa). Residues 81 to 120 are compositionally biased toward pro residues; it reads RPGPKPGPPVAQQPAAPAAPPAAPPAPPTPAAAPPSPAPA. Residues 121–135 show a composition bias toward low complexity; it reads APAAATPAEPAAPSA. Composition is skewed to pro residues over residues 136 to 155 and 180 to 191; these read RPGPTPGPRPGPSAPKPGAP and PRPQGPGGPRPG. Residues 192–204 show a composition bias toward gly residues; sequence PGAGGPRPGGGPR. The span at 228 to 240 shows a compositional bias: pro residues; the sequence is GGGPRPGGGPRPT. Residues 241–301 are compositionally biased toward gly residues; the sequence is PGGAGRPGGG…GAAGAFGRPG (61 aa). Residues 305–314 are compositionally biased toward basic residues; that stretch reads KRGRKSKRAK. The 173-residue stretch at 426–598 folds into the tr-type G domain; the sequence is IRPPVVTVMG…VILTADASLD (173 aa). A G1 region spans residues 435–442; that stretch reads GHVDHGKT. 435-442 is a GTP binding site; it reads GHVDHGKT. The segment at 460–464 is G2; the sequence is GITQH. The G3 stretch occupies residues 485-488; sequence DTPG. Residues 485-489 and 539-542 contribute to the GTP site; these read DTPGH and NKID. The tract at residues 539-542 is G4; that stretch reads NKID. The G5 stretch occupies residues 575-577; sequence SAK.

It belongs to the TRAFAC class translation factor GTPase superfamily. Classic translation factor GTPase family. IF-2 subfamily.

It localises to the cytoplasm. One of the essential components for the initiation of protein synthesis. Protects formylmethionyl-tRNA from spontaneous hydrolysis and promotes its binding to the 30S ribosomal subunits. Also involved in the hydrolysis of GTP during the formation of the 70S ribosomal complex. In Mycolicibacterium vanbaalenii (strain DSM 7251 / JCM 13017 / BCRC 16820 / KCTC 9966 / NRRL B-24157 / PYR-1) (Mycobacterium vanbaalenii), this protein is Translation initiation factor IF-2.